The chain runs to 165 residues: Endoribonuclease YbeY (165 aa).

Residues histidine 130, histidine 134, and histidine 140 each contribute to the Zn(2+) site.

Belongs to the endoribonuclease YbeY family. The cofactor is Zn(2+).

It is found in the cytoplasm. Single strand-specific metallo-endoribonuclease involved in late-stage 70S ribosome quality control and in maturation of the 3' terminus of the 16S rRNA. In Streptococcus sanguinis (strain SK36), this protein is Endoribonuclease YbeY.